The primary structure comprises 442 residues: Proline--tRNA ligase (442 aa).

It belongs to the class-II aminoacyl-tRNA synthetase family. ProS type 2 subfamily. Homodimer.

It is found in the cytoplasm. The enzyme catalyses tRNA(Pro) + L-proline + ATP = L-prolyl-tRNA(Pro) + AMP + diphosphate. Catalyzes the attachment of proline to tRNA(Pro) in a two-step reaction: proline is first activated by ATP to form Pro-AMP and then transferred to the acceptor end of tRNA(Pro). This chain is Proline--tRNA ligase, found in Brucella anthropi (strain ATCC 49188 / DSM 6882 / CCUG 24695 / JCM 21032 / LMG 3331 / NBRC 15819 / NCTC 12168 / Alc 37) (Ochrobactrum anthropi).